We begin with the raw amino-acid sequence, 85 residues long: Large ribosomal subunit protein bL27 (85 aa).

The tract at residues 1 to 20 (MAHKKAGGSTRNGRDSESKR) is disordered.

This sequence belongs to the bacterial ribosomal protein bL27 family.

The chain is Large ribosomal subunit protein bL27 from Azotobacter vinelandii (strain DJ / ATCC BAA-1303).